A 181-amino-acid chain; its full sequence is Protein GrpE (181 aa).

Positions methionine 1 to leucine 21 are disordered. Residues leucine 8–leucine 21 are compositionally biased toward low complexity.

The protein belongs to the GrpE family. As to quaternary structure, homodimer.

The protein localises to the cytoplasm. In terms of biological role, participates actively in the response to hyperosmotic and heat shock by preventing the aggregation of stress-denatured proteins, in association with DnaK and GrpE. It is the nucleotide exchange factor for DnaK and may function as a thermosensor. Unfolded proteins bind initially to DnaJ; upon interaction with the DnaJ-bound protein, DnaK hydrolyzes its bound ATP, resulting in the formation of a stable complex. GrpE releases ADP from DnaK; ATP binding to DnaK triggers the release of the substrate protein, thus completing the reaction cycle. Several rounds of ATP-dependent interactions between DnaJ, DnaK and GrpE are required for fully efficient folding. The polypeptide is Protein GrpE (Trichlorobacter lovleyi (strain ATCC BAA-1151 / DSM 17278 / SZ) (Geobacter lovleyi)).